We begin with the raw amino-acid sequence, 597 residues long: Phosphomethylpyrimidine synthase (597 aa).

Substrate is bound by residues Asn207, Met236, Tyr265, His301, 321-323 (SRG), 362-365 (DGLR), and Glu401. Residue His405 coordinates Zn(2+). Residue Tyr428 participates in substrate binding. Zn(2+) is bound at residue His469. Positions 549, 552, and 557 each coordinate [4Fe-4S] cluster.

It belongs to the ThiC family. As to quaternary structure, homodimer. [4Fe-4S] cluster serves as cofactor.

It carries out the reaction 5-amino-1-(5-phospho-beta-D-ribosyl)imidazole + S-adenosyl-L-methionine = 4-amino-2-methyl-5-(phosphooxymethyl)pyrimidine + CO + 5'-deoxyadenosine + formate + L-methionine + 3 H(+). It functions in the pathway cofactor biosynthesis; thiamine diphosphate biosynthesis. Its function is as follows. Catalyzes the synthesis of the hydroxymethylpyrimidine phosphate (HMP-P) moiety of thiamine from aminoimidazole ribotide (AIR) in a radical S-adenosyl-L-methionine (SAM)-dependent reaction. The polypeptide is Phosphomethylpyrimidine synthase (Gluconobacter oxydans (strain 621H) (Gluconobacter suboxydans)).